We begin with the raw amino-acid sequence, 414 residues long: Tyrosine--tRNA ligase (414 aa).

Residues 57–66 carry the 'HIGH' region motif; it reads PSAPDVHIGH. The 'KMSKS' region signature appears at 241 to 245; the sequence is KMSKS. Lys-244 contacts ATP. Residues 352-413 form the S4 RNA-binding domain; that stretch reads VPLIDLLVTL…GKRKFAKLSL (62 aa).

It belongs to the class-I aminoacyl-tRNA synthetase family. TyrS type 2 subfamily. As to quaternary structure, homodimer.

The protein resides in the cytoplasm. The catalysed reaction is tRNA(Tyr) + L-tyrosine + ATP = L-tyrosyl-tRNA(Tyr) + AMP + diphosphate + H(+). Functionally, catalyzes the attachment of tyrosine to tRNA(Tyr) in a two-step reaction: tyrosine is first activated by ATP to form Tyr-AMP and then transferred to the acceptor end of tRNA(Tyr). The protein is Tyrosine--tRNA ligase of Shouchella clausii (strain KSM-K16) (Alkalihalobacillus clausii).